The following is a 154-amino-acid chain: Ribosome maturation factor RimP (154 aa).

This sequence belongs to the RimP family.

It is found in the cytoplasm. Functionally, required for maturation of 30S ribosomal subunits. The polypeptide is Ribosome maturation factor RimP (Alkaliphilus oremlandii (strain OhILAs) (Clostridium oremlandii (strain OhILAs))).